A 211-amino-acid chain; its full sequence is Large ribosomal subunit protein uL3 (211 aa).

Gln150 is modified (N5-methylglutamine).

It belongs to the universal ribosomal protein uL3 family. Part of the 50S ribosomal subunit. Forms a cluster with proteins L14 and L19. Methylated by PrmB.

Its function is as follows. One of the primary rRNA binding proteins, it binds directly near the 3'-end of the 23S rRNA, where it nucleates assembly of the 50S subunit. The sequence is that of Large ribosomal subunit protein uL3 from Stutzerimonas stutzeri (strain A1501) (Pseudomonas stutzeri).